The following is a 575-amino-acid chain: Electron transfer flavoprotein-ubiquinone oxidoreductase, mitochondrial (575 aa).

The N-terminal 33 residues, 1 to 33, are a transit peptide targeting the mitochondrion; the sequence is MQRVLRAAAAGIGHASGHRAPRWGAAAAAARWL. 44–58 provides a ligand contact to FAD; sequence VVVVGAGPAGLAAAI. The stretch at 82–103 is an intramembrane region; it reads VGAHVLSGNVFEPRALDELIPK. A ubiquinone is bound by residues Gly276 and Gly277. An intramembrane segment occupies 343-363; the sequence is IPNPVFPGGAIIGCSAGFLNV. [4Fe-4S] cluster is bound by residues Cys520, Cys544, Cys547, and Cys550. The region spanning 535–564 is the 4Fe-4S ferredoxin-type domain; it reads QKLHINAQNCLHCKACDIKDPKQNIEWTVP.

It belongs to the ETF-QO/FixC family. [4Fe-4S] cluster is required as a cofactor. The cofactor is FAD.

The protein localises to the mitochondrion inner membrane. It catalyses the reaction a ubiquinone + reduced [electron-transfer flavoprotein] = a ubiquinol + oxidized [electron-transfer flavoprotein] + H(+). Functionally, accepts electrons from ETF and reduces ubiquinone. The sequence is that of Electron transfer flavoprotein-ubiquinone oxidoreductase, mitochondrial from Oryza sativa subsp. japonica (Rice).